A 430-amino-acid chain; its full sequence is Histidinol dehydrogenase (430 aa).

NAD(+) contacts are provided by Tyr-130, Gln-191, and Asn-214. Substrate contacts are provided by Ser-237, Gln-259, and His-262. 2 residues coordinate Zn(2+): Gln-259 and His-262. Residues Glu-327 and His-328 each act as proton acceptor in the active site. Residues His-328, Asp-361, Glu-415, and His-420 each contribute to the substrate site. A Zn(2+)-binding site is contributed by Asp-361. His-420 is a binding site for Zn(2+).

It belongs to the histidinol dehydrogenase family. The cofactor is Zn(2+).

The enzyme catalyses L-histidinol + 2 NAD(+) + H2O = L-histidine + 2 NADH + 3 H(+). The protein operates within amino-acid biosynthesis; L-histidine biosynthesis; L-histidine from 5-phospho-alpha-D-ribose 1-diphosphate: step 9/9. Its function is as follows. Catalyzes the sequential NAD-dependent oxidations of L-histidinol to L-histidinaldehyde and then to L-histidine. This is Histidinol dehydrogenase (hisD) from Zymomonas mobilis subsp. mobilis (strain ATCC 31821 / ZM4 / CP4).